The primary structure comprises 151 residues: MSLLGGMWKSTKPSRSKSPKPSSNPLRSSGLNSGMSSRLNSKSSLRSGHSRSSNTGRSSRQKSISGSLGSNPISSSRLNSKTLLSSIFMCKYLYPPWINNFGNFGRVEPPPLIEKNLKKSKKIKIKIHPWTGFPYNQVLSEKAKKYKKIRG.

The tract at residues 1-77 (MSLLGGMWKS…LGSNPISSSR (77 aa)) is disordered. Composition is skewed to low complexity over residues 19-54 (PKPS…RSSN) and 63-76 (SISG…ISSS).

This is an uncharacterized protein from Methanothermobacter marburgensis (strain ATCC BAA-927 / DSM 2133 / JCM 14651 / NBRC 100331 / OCM 82 / Marburg) (Methanobacterium thermoautotrophicum).